The chain runs to 400 residues: Subtilisin-like protease 7 (400 aa).

Positions 1-20 (MGFITKAIPLALAAASVING) are cleaved as a signal peptide. Residues 21–119 (AEILETRAGV…IERDARVQIN (99 aa)) constitute a propeptide that is removed on maturation. The region spanning 36–118 (KYIVVMNDGI…YIERDARVQI (83 aa)) is the Inhibitor I9 domain. Positions 129–400 (SWGLARVGSK…SKLINNGSGM (272 aa)) constitute a Peptidase S8 domain. Active-site charge relay system residues include aspartate 161 and histidine 192. N-linked (GlcNAc...) asparagine glycosylation is present at asparagine 252. The active-site Charge relay system is serine 346. A glycan (N-linked (GlcNAc...) asparagine) is linked at asparagine 396.

The protein belongs to the peptidase S8 family.

It localises to the secreted. Its function is as follows. Secreted subtilisin-like serine protease with keratinolytic activity that contributes to pathogenicity. The chain is Subtilisin-like protease 7 (SUB7) from Trichophyton violaceum.